A 313-amino-acid chain; its full sequence is Ribosomal RNA small subunit methyltransferase H (313 aa).

Residues 35–37 (GGH), D55, F81, D103, and Q110 contribute to the S-adenosyl-L-methionine site.

Belongs to the methyltransferase superfamily. RsmH family.

The protein resides in the cytoplasm. The enzyme catalyses cytidine(1402) in 16S rRNA + S-adenosyl-L-methionine = N(4)-methylcytidine(1402) in 16S rRNA + S-adenosyl-L-homocysteine + H(+). Specifically methylates the N4 position of cytidine in position 1402 (C1402) of 16S rRNA. In Pseudomonas syringae pv. syringae (strain B728a), this protein is Ribosomal RNA small subunit methyltransferase H.